The following is a 224-amino-acid chain: Probable 2' cyclic ADP-D-ribose synthase BdTIR (224 aa).

Residues 51-178 (SRYEVFINHR…RFKFALREAK (128 aa)) enclose the TIR domain. Residues 60-65 (RGVDTK) and G93 each bind NAD(+). E127 is an active-site residue.

As to quaternary structure, homodimer.

The catalysed reaction is NAD(+) + H2O = ADP-D-ribose + nicotinamide + H(+). It catalyses the reaction NADP(+) + H2O = ADP-D-ribose 2'-phosphate + nicotinamide + H(+). It carries out the reaction NAD(+) = 2'cADPR + nicotinamide + H(+). In terms of biological role, an NAD(+) hydrolase (NADase). Upon activation catalyzes cleavage of NAD(+) into ADP-D-ribose (ADPR) and nicotinamide; NAD(+) cleavage triggers a defense system that promotes cell death. In addition to ADPR, also generates a cyclization variant of cyclic ADPR termed v-cADPR (2'cADPR). Also hydrolyzes NADP(+), but not other NAD(+)-related molecules. v-cADPR activates ThsA, an NAD(+) hydrolase in B.cereus (AC J8G6Z1). Probably makes 2'cADPR; the cADPR made by this protein is bound by cmTad1 (AC P0DW61) and activates ThsA from B.cereus. Boiling cmTad1 bound to the cyclic nucleotide releases 2'cADPR, strongly suggesting it is the product of this protein. This Brachypodium distachyon (Purple false brome) protein is Probable 2' cyclic ADP-D-ribose synthase BdTIR.